The sequence spans 235 residues: Phosphatidylserine decarboxylase proenzyme (235 aa).

The active-site Schiff-base intermediate with substrate; via pyruvic acid is Ser-204. A Pyruvic acid (Ser); by autocatalysis modification is found at Ser-204.

This sequence belongs to the phosphatidylserine decarboxylase family. PSD-A subfamily. As to quaternary structure, heterodimer of a large membrane-associated beta subunit and a small pyruvoyl-containing alpha subunit. Pyruvate serves as cofactor. Is synthesized initially as an inactive proenzyme. Formation of the active enzyme involves a self-maturation process in which the active site pyruvoyl group is generated from an internal serine residue via an autocatalytic post-translational modification. Two non-identical subunits are generated from the proenzyme in this reaction, and the pyruvate is formed at the N-terminus of the alpha chain, which is derived from the carboxyl end of the proenzyme. The post-translation cleavage follows an unusual pathway, termed non-hydrolytic serinolysis, in which the side chain hydroxyl group of the serine supplies its oxygen atom to form the C-terminus of the beta chain, while the remainder of the serine residue undergoes an oxidative deamination to produce ammonia and the pyruvoyl prosthetic group on the alpha chain.

The protein localises to the cell membrane. The catalysed reaction is a 1,2-diacyl-sn-glycero-3-phospho-L-serine + H(+) = a 1,2-diacyl-sn-glycero-3-phosphoethanolamine + CO2. It functions in the pathway phospholipid metabolism; phosphatidylethanolamine biosynthesis; phosphatidylethanolamine from CDP-diacylglycerol: step 2/2. Functionally, catalyzes the formation of phosphatidylethanolamine (PtdEtn) from phosphatidylserine (PtdSer). In Mycobacterium sp. (strain KMS), this protein is Phosphatidylserine decarboxylase proenzyme.